A 399-amino-acid chain; its full sequence is Organelle RRM domain-containing protein 1, chloroplastic (399 aa).

The N-terminal 52 residues, methionine 1–serine 52, are a transit peptide targeting the chloroplast. The RRM domain maps to lysine 295–histidine 373. Residues aspartate 377–glycine 399 form a disordered region.

Its subcellular location is the plastid. It localises to the chloroplast. Involved in C-to-U editing of chloroplastic RNA. Functions as major chloroplastic editing factor. Controls a majority of the chloroplastic editing sites. The sequence is that of Organelle RRM domain-containing protein 1, chloroplastic from Oryza sativa subsp. japonica (Rice).